The following is an 85-amino-acid chain: Beta-insect depressant toxin Lqh-dprIT3g (85 aa).

Residues 1–21 (MKLLLLLTISASMLIEGLVNA) form the signal peptide. The region spanning 22–82 (DGYIRGGDGC…EWDYETDTCG (61 aa)) is the LCN-type CS-alpha/beta domain. Cystine bridges form between cysteine 31/cysteine 81, cysteine 35/cysteine 56, cysteine 42/cysteine 63, and cysteine 46/cysteine 65. Glycine 82 is subject to Glycine amide.

It belongs to the long (4 C-C) scorpion toxin superfamily. Sodium channel inhibitor family. Beta subfamily. Expressed by the venom gland.

It is found in the secreted. Its function is as follows. Depressant insect beta-toxins cause a transient contraction paralysis followed by a slow flaccid paralysis. They bind voltage-independently at site-4 of sodium channels (Nav) and block action potentials, primarily by depolarizing the axonal membrane and suppressing the sodium current. This depressant toxin is active only on insects. It is found in a relatively small amount in the venom. The polypeptide is Beta-insect depressant toxin Lqh-dprIT3g (Leiurus hebraeus (Hebrew deathstalker scorpion)).